Consider the following 369-residue polypeptide: Tetraacyldisaccharide 4'-kinase (369 aa).

ATP is bound at residue valine 68–threonine 75.

Belongs to the LpxK family.

The enzyme catalyses a lipid A disaccharide + ATP = a lipid IVA + ADP + H(+). It participates in glycolipid biosynthesis; lipid IV(A) biosynthesis; lipid IV(A) from (3R)-3-hydroxytetradecanoyl-[acyl-carrier-protein] and UDP-N-acetyl-alpha-D-glucosamine: step 6/6. Transfers the gamma-phosphate of ATP to the 4'-position of a tetraacyldisaccharide 1-phosphate intermediate (termed DS-1-P) to form tetraacyldisaccharide 1,4'-bis-phosphate (lipid IVA). The chain is Tetraacyldisaccharide 4'-kinase from Chlamydia muridarum (strain MoPn / Nigg).